The sequence spans 344 residues: Phenylalanine--tRNA ligase alpha subunit (344 aa).

Glu255 is a binding site for Mg(2+).

This sequence belongs to the class-II aminoacyl-tRNA synthetase family. Phe-tRNA synthetase alpha subunit type 1 subfamily. Tetramer of two alpha and two beta subunits. It depends on Mg(2+) as a cofactor.

The protein localises to the cytoplasm. The catalysed reaction is tRNA(Phe) + L-phenylalanine + ATP = L-phenylalanyl-tRNA(Phe) + AMP + diphosphate + H(+). The sequence is that of Phenylalanine--tRNA ligase alpha subunit from Cytophaga hutchinsonii (strain ATCC 33406 / DSM 1761 / CIP 103989 / NBRC 15051 / NCIMB 9469 / D465).